We begin with the raw amino-acid sequence, 84 residues long: Acetylcholine receptor subunit alpha (84 aa).

The cysteines at positions 7 and 21 are disulfide-linked. Residues N20 and N66 are each glycosylated (N-linked (GlcNAc...) asparagine). Residues C71 and C72 are joined by a disulfide bond.

Belongs to the ligand-gated ion channel (TC 1.A.9) family. Acetylcholine receptor (TC 1.A.9.1) subfamily. Alpha-1/CHRNA1 sub-subfamily. As to quaternary structure, one of the alpha chains that assemble within the acetylcholine receptor, a pentamer of two alpha chains, a beta, a delta, and a gamma (in immature muscle) or epsilon (in mature muscle) chains. The muscle heteropentamer composed of alpha-1, beta-1, delta, epsilon subunits interacts with the alpha-conotoxin ImII.

The protein localises to the postsynaptic cell membrane. It is found in the cell membrane. It carries out the reaction K(+)(in) = K(+)(out). It catalyses the reaction Na(+)(in) = Na(+)(out). In terms of biological role, upon acetylcholine binding, the AChR responds by an extensive change in conformation that affects all subunits and leads to opening of an ion-conducting channel across the plasma membrane. The protein is Acetylcholine receptor subunit alpha (CHRNA1) of Herpestes ichneumon (Egyptian mongoose).